Consider the following 283-residue polypeptide: Probable 3-deoxy-manno-octulosonic acid transferase (283 aa).

It is found in the cytoplasm. It carries out the reaction an alpha-Kdo-(2-&gt;4)-alpha-Kdo-(2-&gt;6)-lipid IVA + CMP-3-deoxy-beta-D-manno-octulosonate = an alpha-Kdo-(2-&gt;4)-alpha-Kdo-(2-&gt;4)-alpha-Kdo-(2-&gt;6)-lipid IVA + CMP + H(+). The enzyme catalyses alpha-Kdo-(2-&gt;4)-alpha-Kdo-(2-&gt;6)-lipid IVA (E. coli) + CMP-3-deoxy-beta-D-manno-octulosonate = alpha-Kdo-(2-&gt;4)-alpha-Kdo-(2-&gt;4)-alpha-Kdo-(2-&gt;6)-lipid IVA + CMP + H(+). The protein operates within bacterial outer membrane biogenesis; LPS core biosynthesis. Its pathway is bacterial outer membrane biogenesis; LOS core biosynthesis. Its function is as follows. Involved in the biosynthesis of the core oligosaccharide region of lipopolysaccharide (LPS). Required for the addition of 3-deoxy-D-manno-oct-2-ulosonic acid III (KdoIII) to the KdoII residue of the inner lipopolysaccharide core. May also play a role in a lipooligosaccharide (LOS) biosynthesis pathway. This is Probable 3-deoxy-manno-octulosonic acid transferase from Escherichia coli (strain K12).